The following is a 432-amino-acid chain: Adenylosuccinate synthetase (432 aa).

GTP-binding positions include 13–19 (GDEGKGK) and 41–43 (GHT). The Proton acceptor role is filled by Asp14. 2 residues coordinate Mg(2+): Asp14 and Gly41. IMP is bound by residues 14 to 17 (DEGK), 39 to 42 (NAGH), Thr130, Arg144, Gln225, Thr240, and Arg304. The active-site Proton donor is His42. Position 300–306 (300–306 (ATTGRKR)) interacts with substrate. Residues Arg306, 332–334 (KLD), and 415–417 (STG) contribute to the GTP site.

Belongs to the adenylosuccinate synthetase family. As to quaternary structure, homodimer. Mg(2+) is required as a cofactor.

It is found in the cytoplasm. It carries out the reaction IMP + L-aspartate + GTP = N(6)-(1,2-dicarboxyethyl)-AMP + GDP + phosphate + 2 H(+). It participates in purine metabolism; AMP biosynthesis via de novo pathway; AMP from IMP: step 1/2. Functionally, plays an important role in the de novo pathway of purine nucleotide biosynthesis. Catalyzes the first committed step in the biosynthesis of AMP from IMP. The protein is Adenylosuccinate synthetase of Vibrio cholerae serotype O1 (strain M66-2).